We begin with the raw amino-acid sequence, 513 residues long: GMP synthase [glutamine-hydrolyzing] (513 aa).

The region spanning 8-198 (KIIVLDYGSQ…ALNTCGAKGN (191 aa)) is the Glutamine amidotransferase type-1 domain. Catalysis depends on C85, which acts as the Nucleophile. Catalysis depends on residues H172 and E174. Residues 199–388 (WSMENFIDMQ…LGMPDEIVWR (190 aa)) enclose the GMPS ATP-PPase domain. 226–232 (SGGVDSS) serves as a coordination point for ATP.

In terms of assembly, homodimer.

It catalyses the reaction XMP + L-glutamine + ATP + H2O = GMP + L-glutamate + AMP + diphosphate + 2 H(+). The protein operates within purine metabolism; GMP biosynthesis; GMP from XMP (L-Gln route): step 1/1. Its function is as follows. Catalyzes the synthesis of GMP from XMP. This chain is GMP synthase [glutamine-hydrolyzing], found in Lactococcus lactis subsp. cremoris (strain SK11).